The primary structure comprises 234 residues: Phosphoribosylformylglycinamidine synthase subunit PurQ (234 aa).

One can recognise a Glutamine amidotransferase type-1 domain in the interval 3-231 (AAVVVFPGSN…ALYLERRKDH (229 aa)). C87 (nucleophile) is an active-site residue. Residues H200 and E202 contribute to the active site.

Part of the FGAM synthase complex composed of 1 PurL, 1 PurQ and 2 PurS subunits.

It is found in the cytoplasm. The enzyme catalyses N(2)-formyl-N(1)-(5-phospho-beta-D-ribosyl)glycinamide + L-glutamine + ATP + H2O = 2-formamido-N(1)-(5-O-phospho-beta-D-ribosyl)acetamidine + L-glutamate + ADP + phosphate + H(+). It carries out the reaction L-glutamine + H2O = L-glutamate + NH4(+). The protein operates within purine metabolism; IMP biosynthesis via de novo pathway; 5-amino-1-(5-phospho-D-ribosyl)imidazole from N(2)-formyl-N(1)-(5-phospho-D-ribosyl)glycinamide: step 1/2. In terms of biological role, part of the phosphoribosylformylglycinamidine synthase complex involved in the purines biosynthetic pathway. Catalyzes the ATP-dependent conversion of formylglycinamide ribonucleotide (FGAR) and glutamine to yield formylglycinamidine ribonucleotide (FGAM) and glutamate. The FGAM synthase complex is composed of three subunits. PurQ produces an ammonia molecule by converting glutamine to glutamate. PurL transfers the ammonia molecule to FGAR to form FGAM in an ATP-dependent manner. PurS interacts with PurQ and PurL and is thought to assist in the transfer of the ammonia molecule from PurQ to PurL. This Pseudothermotoga lettingae (strain ATCC BAA-301 / DSM 14385 / NBRC 107922 / TMO) (Thermotoga lettingae) protein is Phosphoribosylformylglycinamidine synthase subunit PurQ.